The sequence spans 259 residues: Methanethiol S-methyltransferase 2 (259 aa).

5 consecutive transmembrane segments (helical) span residues 5–25 (LAIL…FLYA), 46–66 (LGEA…QHSV), 88–108 (TYVL…RPIP), 115–135 (SGIA…IAFA), and 182–202 (FLLA…FALA).

It belongs to the nurim family.

It is found in the membrane. It carries out the reaction methanethiol + S-adenosyl-L-methionine = dimethyl sulfide + S-adenosyl-L-homocysteine + H(+). Its function is as follows. Catalyzes the methylation of methanethiol (MeSH) to yield dimethylsulphide (DMS). The polypeptide is Methanethiol S-methyltransferase 2 (Bradyrhizobium diazoefficiens (strain JCM 10833 / BCRC 13528 / IAM 13628 / NBRC 14792 / USDA 110)).